The chain runs to 211 residues: Regulator of G-protein signaling 2 (211 aa).

A necessary for membrane association region spans residues 32-66; the sequence is KMKRTLLKDWKTRLSYFLQNSSTPGKPKTGKKSKQ. A necessary to inhibit protein synthesis region spans residues 79-116; that stretch reads LWAEAFDELLASKYGLAAFRAFLKSEFCEENIEFWLAC. Positions 83-199 constitute an RGS domain; it reads AFDELLASKY…LESEFYQDLC (117 aa).

As to quaternary structure, interacts with GNAQ. Does not interact with GNAI1 and GNAI3. Interacts with EIF2B5. Interacts with PRKG1 (isoform alpha). Phosphorylated by protein kinase C. Phosphorylation by PRKG1 leads to activation of RGS2 activity.

Its subcellular location is the cell membrane. The protein localises to the cytoplasm. It localises to the nucleus. It is found in the nucleolus. Its function is as follows. Regulates G protein-coupled receptor signaling cascades. Inhibits signal transduction by increasing the GTPase activity of G protein alpha subunits, thereby driving them into their inactive GDP-bound form. It is involved in the negative regulation of the angiotensin-activated signaling pathway. Plays a role in the regulation of blood pressure in response to signaling via G protein-coupled receptors and GNAQ. Plays a role in regulating the constriction and relaxation of vascular smooth muscle. Binds EIF2B5 and blocks its activity, thereby inhibiting the translation of mRNA into protein. This Rattus norvegicus (Rat) protein is Regulator of G-protein signaling 2 (Rgs2).